Consider the following 295-residue polypeptide: Accessory protein VasW (295 aa).

In terms of biological role, plays an accessory role in VasX-mediated bacterial killing. The chain is Accessory protein VasW from Vibrio cholerae serotype O1 (strain ATCC 39315 / El Tor Inaba N16961).